A 311-amino-acid chain; its full sequence is Malate dehydrogenase (311 aa).

NAD(+) contacts are provided by residues Gly7 to Gly13 and Asp34. Residues Arg81 and Arg87 each contribute to the substrate site. NAD(+) is bound by residues Asn94 and Ile117–Asn119. Residues Asn119 and Arg153 each contribute to the substrate site. Catalysis depends on His177, which acts as the Proton acceptor. Met227 is a binding site for NAD(+).

The protein belongs to the LDH/MDH superfamily. MDH type 1 family. As to quaternary structure, homodimer.

The enzyme catalyses (S)-malate + NAD(+) = oxaloacetate + NADH + H(+). In terms of biological role, catalyzes the reversible oxidation of malate to oxaloacetate. This is Malate dehydrogenase from Haemophilus influenzae (strain PittEE).